The following is a 584-amino-acid chain: Tyrosine-protein kinase Dnt (584 aa).

The N-terminal stretch at Met-1 to Gly-40 is a signal peptide. At Ser-41–Gly-208 the chain is on the extracellular side. Residues Val-49–Cys-180 form the WIF domain. 4 N-linked (GlcNAc...) asparagine glycosylation sites follow: Asn-124, Asn-163, Asn-168, and Asn-183. Residues Leu-209 to Ile-229 traverse the membrane as a helical segment. At Ala-230 to Val-584 the chain is on the cytoplasmic side. Residues Gln-241–His-261 are disordered. The span at Met-250–His-261 shows a compositional bias: polar residues. Residues Val-317–Tyr-577 form the Protein kinase domain. ATP contacts are provided by residues Leu-323–Val-331 and Lys-345. Asp-442 functions as the Proton acceptor in the catalytic mechanism. Tyr-472 is modified (phosphotyrosine; by autocatalysis).

The protein belongs to the protein kinase superfamily. Tyr protein kinase family. As to expression, expressed in dynamic domains in the embryonic epidermis, many of which border on sites of epithelial invagination into the embryo interior, including ventral furrow, cephalic furrow, fore- and hindgut, optic lobe and tracheal pits. Later in embryogenesis, expression is seen in imaginal tissues.

The protein resides in the cell membrane. The catalysed reaction is L-tyrosyl-[protein] + ATP = O-phospho-L-tyrosyl-[protein] + ADP + H(+). Its function is as follows. May play an essential role in neuronal pathway recognition and ventral muscle attachment site selection. This is Tyrosine-protein kinase Dnt (dnt) from Drosophila melanogaster (Fruit fly).